A 234-amino-acid chain; its full sequence is Nuclear transcription factor Y subunit B-6 (234 aa).

Disordered regions lie at residues 1 to 21 and 35 to 55; these read MERGGFHGYRKLSVNNTTPSP and MRPPEFNQPNKTSNGGEEECT. A DNA-binding region spans residues 63 to 69; it reads MPIANVI. The subunit association domain (SAD) stretch occupies residues 90–101; the sequence is IQECVSEYISFI. Residues 206–234 are disordered; that stretch reads NEPNSKMSGSSSGASGARVEVFPTQQHKY. Low complexity predominate over residues 213–222; the sequence is SGSSSGASGA.

Belongs to the NFYB/HAP3 subunit family. In terms of assembly, heterotrimeric transcription factor composed of three components, NF-YA, NF-YB and NF-YC. NF-YB and NF-YC must interact and dimerize for NF-YA association and DNA binding. Interacts with PRN1. Binds directly with DPB3-1. In terms of tissue distribution, expressed in roots, flowers and developing siliques. Present in etiolated seedlings.

It is found in the nucleus. Its function is as follows. Component of the NF-Y/HAP transcription factor complex. The NF-Y complex stimulates the transcription of various genes by recognizing and binding to a CCAAT motif in promoters. Plays a role in the regulation of the embryogenesis. Involved in the abscisic acid (ABA) signaling pathway. In Arabidopsis thaliana (Mouse-ear cress), this protein is Nuclear transcription factor Y subunit B-6.